The primary structure comprises 485 residues: uncharacterized protein (485 aa).

The next 11 membrane-spanning stretches (helical) occupy residues 79–99 (LVTL…LIFA), 117–137 (VFAL…FLVF), 139–159 (FFSG…LADL), 170–190 (VIYF…SGFI), 199–219 (WEFW…FLLL), 275–295 (ILIC…LVLI), 313–333 (GLMY…AMPI), 355–375 (LPMG…FGWT), 380–400 (IFWF…IMTS), 421–441 (GVKI…ESLF), and 448–468 (WGCT…PILF).

The protein belongs to the major facilitator superfamily. CAR1 family.

The protein resides in the membrane. This is an uncharacterized protein from Schizosaccharomyces pombe (strain 972 / ATCC 24843) (Fission yeast).